The following is a 260-amino-acid chain: MALRRPMVAGNWKMNGTAQLAQELFTKFATKLQNDSAEVVLCPPSIFLESVRQQLDANKEALNGCLVRMGAQNLSQHDFGAYTGEVSGQMLKDSGCRYVIIGHSERRRMYGETSDIVAEKFAAAQKHGLTPILCVGESGPAREARRTFEVIAEELDVVIEKNGTMAFDNAIIAYEPLWAVGTGKSATPEQAQEVHAFIRKRLSEVSPYIGENIRILYGGSVTPSNAADLFAQPDVDGGLIGGASLNSTEFLSLCSIAMSA.

Asn-11–Lys-13 lines the substrate pocket. His-103 functions as the Electrophile in the catalytic mechanism. The active-site Proton acceptor is Glu-175. Residues Gly-181, Ser-220, and Gly-241–Gly-242 each bind substrate.

It belongs to the triosephosphate isomerase family. As to quaternary structure, homodimer.

It is found in the cytoplasm. The enzyme catalyses D-glyceraldehyde 3-phosphate = dihydroxyacetone phosphate. Its pathway is carbohydrate biosynthesis; gluconeogenesis. The protein operates within carbohydrate degradation; glycolysis; D-glyceraldehyde 3-phosphate from glycerone phosphate: step 1/1. In terms of biological role, involved in the gluconeogenesis. Catalyzes stereospecifically the conversion of dihydroxyacetone phosphate (DHAP) to D-glyceraldehyde-3-phosphate (G3P). The polypeptide is Triosephosphate isomerase (Shewanella loihica (strain ATCC BAA-1088 / PV-4)).